The primary structure comprises 247 residues: MSHRDTLFSAPIARLGDWTFDERVAEVFPDMIQRSVPGYSNIISMIGMLAERFVQPNTQVYDLGCSLGAATLSVRRNIRHEHCRIIAVDNSPAMIERCRRHIDAYKAPTPVEVVEGDIRDITIENASMVVLNFTLQFLEPAERQALLDKIYLGLNPGGALVLSEKFSFEDAKVGELLFNMHHDFKRANGYSELEISQKRSMLENVMLTDSVETHKARLRQAGFEHSELWFQCFNFGSLVALKAGVAA.

S-adenosyl-L-methionine-binding positions include Tyr39, Gly64–Ser66, Asp89–Asn90, Asp117–Ile118, Asn132, and Arg199.

It belongs to the class I-like SAM-binding methyltransferase superfamily. Cx-SAM synthase family. As to quaternary structure, homodimer.

The enzyme catalyses prephenate + S-adenosyl-L-methionine = carboxy-S-adenosyl-L-methionine + 3-phenylpyruvate + H2O. Catalyzes the conversion of S-adenosyl-L-methionine (SAM) to carboxy-S-adenosyl-L-methionine (Cx-SAM). This chain is Carboxy-S-adenosyl-L-methionine synthase, found in Salmonella agona (strain SL483).